Consider the following 456-residue polypeptide: Arginine biosynthesis bifunctional protein ArgJ, mitochondrial (456 aa).

Substrate is bound by residues threonine 184, lysine 213, threonine 224, glutamate 311, asparagine 451, and threonine 456. Threonine 224 (nucleophile) is an active-site residue.

This sequence belongs to the ArgJ family. As to quaternary structure, heterodimer of an alpha and a beta chain. In terms of processing, the alpha and beta chains are autoproteolytically processed from a single precursor protein within the mitochondrion.

The protein resides in the mitochondrion matrix. The catalysed reaction is N(2)-acetyl-L-ornithine + L-glutamate = N-acetyl-L-glutamate + L-ornithine. The enzyme catalyses L-glutamate + acetyl-CoA = N-acetyl-L-glutamate + CoA + H(+). It participates in amino-acid biosynthesis; L-arginine biosynthesis; L-ornithine and N-acetyl-L-glutamate from L-glutamate and N(2)-acetyl-L-ornithine (cyclic): step 1/1. It functions in the pathway amino-acid biosynthesis; L-arginine biosynthesis; N(2)-acetyl-L-ornithine from L-glutamate: step 1/4. In terms of biological role, catalyzes two activities which are involved in the cyclic version of arginine biosynthesis: the synthesis of acetylglutamate from glutamate and acetyl-CoA, and of ornithine by transacetylation between acetylornithine and glutamate. This chain is Arginine biosynthesis bifunctional protein ArgJ, mitochondrial, found in Neosartorya fischeri (strain ATCC 1020 / DSM 3700 / CBS 544.65 / FGSC A1164 / JCM 1740 / NRRL 181 / WB 181) (Aspergillus fischerianus).